The primary structure comprises 450 residues: Protein tweety homolog 1 (450 aa).

Over 1-43 (MGAPPGYRPSAWVHLLHQLPRADFQLRPVPSGFAPQEQEYQQA) the chain is Extracellular. A helical transmembrane segment spans residues 44–64 (LLLVAALAGLGLGLSLIFIAV). The Cytoplasmic portion of the chain corresponds to 65-88 (YLIRFCCCRPPEPPGSKTPSPGGG). The helical transmembrane segment at 89–109 (CVTWSCIVALLAGCIGIGIGF) threads the bilayer. Topologically, residues 110–214 (YGNSETSDGV…DVSFVEEYRW (105 aa)) are extracellular. Asn130 carries an N-linked (GlcNAc...) asparagine glycan. A helical membrane pass occupies residues 215-235 (LAYVLLLLLELLVCLFTLLGL). At 236 to 240 (AKQSK) the chain is on the cytoplasmic side. The helical transmembrane segment at 241 to 261 (WLVIVMTVMSLLVLVLSWGSM) threads the bilayer. Topologically, residues 262 to 390 (GLEAATAVGL…LRGLCEDALE (129 aa)) are extracellular. Asn284 and Asn355 each carry an N-linked (GlcNAc...) asparagine glycan. Residues Cys303 and Cys370 are joined by a disulfide bond. Residues 391-411 (GLLFLLLFSLLSAGALATALC) form a helical membrane-spanning segment. The Cytoplasmic segment spans residues 412–450 (SLPRAWALFPPSDDYDDTDDDDPFNPQESKRFVQWQSSI). The segment at 428–450 (DTDDDDPFNPQESKRFVQWQSSI) is disordered. Ser440 is modified (phosphoserine).

The protein belongs to the tweety family. Homotetramer; disulfide-linked. Homodimer. In terms of processing, N-glycosylated. Contains high-mannose, hybrid and complex oligosaccharides.

It is found in the cell membrane. It carries out the reaction chloride(in) = chloride(out). It catalyses the reaction L-glutamate(out) = L-glutamate(in). Functionally, calcium-independent, swelling-dependent volume-regulated anion channel (VRAC-swell) which plays a pivotal role in the process of regulatory volume decrease (RVD) in the brain through the efflux of anions like chloride and organic osmolytes like glutamate. This chain is Protein tweety homolog 1 (TTYH1), found in Macaca fascicularis (Crab-eating macaque).